A 211-amino-acid polypeptide reads, in one-letter code: Imidazole glycerol phosphate synthase subunit HisH (211 aa).

The Glutamine amidotransferase type-1 domain occupies 3-211; it reads VVAVIDYEMG…VSQVREKIAA (209 aa). Catalysis depends on C81, which acts as the Nucleophile. Catalysis depends on residues H186 and E188.

Heterodimer of HisH and HisF.

The protein resides in the cytoplasm. It carries out the reaction 5-[(5-phospho-1-deoxy-D-ribulos-1-ylimino)methylamino]-1-(5-phospho-beta-D-ribosyl)imidazole-4-carboxamide + L-glutamine = D-erythro-1-(imidazol-4-yl)glycerol 3-phosphate + 5-amino-1-(5-phospho-beta-D-ribosyl)imidazole-4-carboxamide + L-glutamate + H(+). The catalysed reaction is L-glutamine + H2O = L-glutamate + NH4(+). Its pathway is amino-acid biosynthesis; L-histidine biosynthesis; L-histidine from 5-phospho-alpha-D-ribose 1-diphosphate: step 5/9. IGPS catalyzes the conversion of PRFAR and glutamine to IGP, AICAR and glutamate. The HisH subunit catalyzes the hydrolysis of glutamine to glutamate and ammonia as part of the synthesis of IGP and AICAR. The resulting ammonia molecule is channeled to the active site of HisF. This chain is Imidazole glycerol phosphate synthase subunit HisH, found in Trichormus variabilis (strain ATCC 29413 / PCC 7937) (Anabaena variabilis).